A 344-amino-acid chain; its full sequence is Holliday junction branch migration complex subunit RuvB (344 aa).

Residues 1–182 are large ATPase domain (RuvB-L); sequence MSDRLISATA…FGIISRLEFY (182 aa). ATP contacts are provided by residues Leu-21, Arg-22, Gly-63, Lys-66, Thr-67, Thr-68, 129–131, Arg-172, Tyr-182, and Arg-219; that span reads EDF. Thr-67 provides a ligand contact to Mg(2+). Positions 183 to 253 are small ATPAse domain (RuvB-S); it reads NNEDLTRIVT…VAAEALEFFE (71 aa). The interval 256–344 is head domain (RuvB-H); that stretch reads PLGLDHTDRR…QKGLEQNSLF (89 aa). The DNA site is built by Arg-311 and Arg-316.

It belongs to the RuvB family. Homohexamer. Forms an RuvA(8)-RuvB(12)-Holliday junction (HJ) complex. HJ DNA is sandwiched between 2 RuvA tetramers; dsDNA enters through RuvA and exits via RuvB. An RuvB hexamer assembles on each DNA strand where it exits the tetramer. Each RuvB hexamer is contacted by two RuvA subunits (via domain III) on 2 adjacent RuvB subunits; this complex drives branch migration. In the full resolvosome a probable DNA-RuvA(4)-RuvB(12)-RuvC(2) complex forms which resolves the HJ.

It localises to the cytoplasm. It carries out the reaction ATP + H2O = ADP + phosphate + H(+). The RuvA-RuvB-RuvC complex processes Holliday junction (HJ) DNA during genetic recombination and DNA repair, while the RuvA-RuvB complex plays an important role in the rescue of blocked DNA replication forks via replication fork reversal (RFR). RuvA specifically binds to HJ cruciform DNA, conferring on it an open structure. The RuvB hexamer acts as an ATP-dependent pump, pulling dsDNA into and through the RuvAB complex. RuvB forms 2 homohexamers on either side of HJ DNA bound by 1 or 2 RuvA tetramers; 4 subunits per hexamer contact DNA at a time. Coordinated motions by a converter formed by DNA-disengaged RuvB subunits stimulates ATP hydrolysis and nucleotide exchange. Immobilization of the converter enables RuvB to convert the ATP-contained energy into a lever motion, pulling 2 nucleotides of DNA out of the RuvA tetramer per ATP hydrolyzed, thus driving DNA branch migration. The RuvB motors rotate together with the DNA substrate, which together with the progressing nucleotide cycle form the mechanistic basis for DNA recombination by continuous HJ branch migration. Branch migration allows RuvC to scan DNA until it finds its consensus sequence, where it cleaves and resolves cruciform DNA. The polypeptide is Holliday junction branch migration complex subunit RuvB (Desulforamulus reducens (strain ATCC BAA-1160 / DSM 100696 / MI-1) (Desulfotomaculum reducens)).